Reading from the N-terminus, the 202-residue chain is FMN-dependent NADH:quinone oxidoreductase (202 aa).

Residues S9, 15–17 (SAS), 95–98 (MYNF), and 139–142 (TSGG) contribute to the FMN site.

This sequence belongs to the azoreductase type 1 family. As to quaternary structure, homodimer. It depends on FMN as a cofactor.

It carries out the reaction 2 a quinone + NADH + H(+) = 2 a 1,4-benzosemiquinone + NAD(+). It catalyses the reaction N,N-dimethyl-1,4-phenylenediamine + anthranilate + 2 NAD(+) = 2-(4-dimethylaminophenyl)diazenylbenzoate + 2 NADH + 2 H(+). Quinone reductase that provides resistance to thiol-specific stress caused by electrophilic quinones. Its function is as follows. Also exhibits azoreductase activity. Catalyzes the reductive cleavage of the azo bond in aromatic azo compounds to the corresponding amines. The sequence is that of FMN-dependent NADH:quinone oxidoreductase from Pseudomonas savastanoi pv. phaseolicola (strain 1448A / Race 6) (Pseudomonas syringae pv. phaseolicola (strain 1448A / Race 6)).